A 251-amino-acid chain; its full sequence is Flap endonuclease Xni (251 aa).

D104 serves as a coordination point for Mg(2+). In terms of domain architecture, 5'-3' exonuclease spans 160–250 (VLPRQLPDYW…SGNLQQLRLK (91 aa)). Residues L171, A172, P180, V182, and V185 each contribute to the K(+) site. Residues 184–189 (GVGAKT) are interaction with DNA.

Belongs to the Xni family. It depends on Mg(2+) as a cofactor. The cofactor is K(+).

Its function is as follows. Has flap endonuclease activity. During DNA replication, flap endonucleases cleave the 5'-overhanging flap structure that is generated by displacement synthesis when DNA polymerase encounters the 5'-end of a downstream Okazaki fragment. The chain is Flap endonuclease Xni from Yersinia pseudotuberculosis serotype I (strain IP32953).